The chain runs to 496 residues: Cytochrome P450 monooxygenase claT (496 aa).

The helical transmembrane segment at 2 to 22 threads the bilayer; sequence LSLIVEATLLLVVLVLSAHYV. Cys-423 contributes to the heme binding site.

The protein belongs to the cytochrome P450 family. Heme is required as a cofactor.

The protein resides in the membrane. The enzyme catalyses wigandol + 4 reduced [NADPH--hemoprotein reductase] + 4 O2 = arnebinol A + 4 oxidized [NADPH--hemoprotein reductase] + 6 H2O + 4 H(+). It carries out the reaction arnebinol A + reduced [NADPH--hemoprotein reductase] + O2 = clavilactone A + oxidized [NADPH--hemoprotein reductase] + H2O + H(+). It catalyses the reaction (2E)-geranylhydroquinone + reduced [NADPH--hemoprotein reductase] + O2 = isoalliodorol + oxidized [NADPH--hemoprotein reductase] + H2O + H(+). It functions in the pathway secondary metabolite biosynthesis; terpenoid biosynthesis. Its function is as follows. Cytochrome P450 monooxygenase; part of the gene cluster that mediates the biosynthesis of clavilactone A, a meroterpenoid that features a unique benzo-fused ten-membered carbocyclic ring unit with an alpha,beta-epoxy-gamma-lactone moiety, forming an intriguing 10/5/3 tricyclic nested skeleton. ClaR, ClaS and ClaT are sufficient to produce clavilactone A. Within the pathway, claT acts as a multifunctional cytochrome P450 monooxygenase that catalyzes a ten-electron oxidation to accomplish the biosynthesis of the 10/5/3 tricyclic nested skeleton in clavilactones. The biosynthesis begins with the prenyltransferase claS that transfers geranyl pyrophosphate (GPP) to hydroquinone to produces geranylhydroquinone. The cytochrome P450 monooxygenase claR then catalyzes the diradical coupling reaction between the intramolecular hydroquinone and allyl moieties to form the benzo-fused ten-membered carbocyclic ring unit of wigantol. Finally the cytochrome P450 monooxygenase claT exquisitely and stereoselectively assembles the alpha,beta-epoxy-gamma-lactone moiety, producing clavilactone A via arnebinol A. The chain is Cytochrome P450 monooxygenase claT from Ampulloclitocybe clavipes (Club foot).